Here is a 190-residue protein sequence, read N- to C-terminus: Putative manganese efflux pump MntP (190 aa).

The next 6 helical transmembrane spans lie at 3-23 (PISL…AALG), 41-61 (LIFG…GQVA), 69-89 (DHWI…YNGI), 105-125 (FWIL…VGVG), 133-153 (IVVA…IGVM), and 168-188 (IIGG…HLSA).

Belongs to the MntP (TC 9.B.29) family.

It is found in the cell inner membrane. Its function is as follows. Probably functions as a manganese efflux pump. This chain is Putative manganese efflux pump MntP, found in Pseudomonas syringae pv. syringae (strain B728a).